Consider the following 317-residue polypeptide: Putative 2-hydroxyacid dehydrogenase SAOUHSC_02577 (317 aa).

Residues 155-156 (EI), 234-236 (ASR), and Asp-260 contribute to the NAD(+) site. Residue Arg-236 is part of the active site. Glu-265 is an active-site residue. Residue His-283 is the Proton donor of the active site. 283–286 (HIGN) contributes to the NAD(+) binding site.

It belongs to the D-isomer specific 2-hydroxyacid dehydrogenase family.

This Staphylococcus aureus (strain NCTC 8325 / PS 47) protein is Putative 2-hydroxyacid dehydrogenase SAOUHSC_02577.